The sequence spans 68 residues: Large ribosomal subunit protein uL29 (68 aa).

Belongs to the universal ribosomal protein uL29 family.

This is Large ribosomal subunit protein uL29 from Chlorobaculum parvum (strain DSM 263 / NCIMB 8327) (Chlorobium vibrioforme subsp. thiosulfatophilum).